Here is a 260-residue protein sequence, read N- to C-terminus: Purine nucleoside phosphorylase PD_1754 (260 aa).

Zn(2+) contacts are provided by His79, Cys120, and His137.

The protein belongs to the purine nucleoside phosphorylase YfiH/LACC1 family. As to quaternary structure, homodimer. Cu(2+) is required as a cofactor. The cofactor is Zn(2+).

The enzyme catalyses adenosine + phosphate = alpha-D-ribose 1-phosphate + adenine. It carries out the reaction S-methyl-5'-thioadenosine + phosphate = 5-(methylsulfanyl)-alpha-D-ribose 1-phosphate + adenine. It catalyses the reaction inosine + phosphate = alpha-D-ribose 1-phosphate + hypoxanthine. The catalysed reaction is adenosine + H2O + H(+) = inosine + NH4(+). Its function is as follows. Purine nucleoside enzyme that catalyzes the phosphorolysis of adenosine and inosine nucleosides, yielding D-ribose 1-phosphate and the respective free bases, adenine and hypoxanthine. Also catalyzes the phosphorolysis of S-methyl-5'-thioadenosine into adenine and S-methyl-5-thio-alpha-D-ribose 1-phosphate. Also has adenosine deaminase activity. This is Purine nucleoside phosphorylase PD_1754 from Xylella fastidiosa (strain Temecula1 / ATCC 700964).